Reading from the N-terminus, the 211-residue chain is Large ribosomal subunit protein uL3 (211 aa).

Residue Q150 is modified to N5-methylglutamine.

The protein belongs to the universal ribosomal protein uL3 family. As to quaternary structure, part of the 50S ribosomal subunit. Forms a cluster with proteins L14 and L19. Post-translationally, methylated by PrmB.

Functionally, one of the primary rRNA binding proteins, it binds directly near the 3'-end of the 23S rRNA, where it nucleates assembly of the 50S subunit. In Stutzerimonas stutzeri (strain A1501) (Pseudomonas stutzeri), this protein is Large ribosomal subunit protein uL3.